A 170-amino-acid polypeptide reads, in one-letter code: Adenine phosphoribosyltransferase (170 aa).

The protein belongs to the purine/pyrimidine phosphoribosyltransferase family. Homodimer.

It is found in the cytoplasm. The catalysed reaction is AMP + diphosphate = 5-phospho-alpha-D-ribose 1-diphosphate + adenine. It functions in the pathway purine metabolism; AMP biosynthesis via salvage pathway; AMP from adenine: step 1/1. Its function is as follows. Catalyzes a salvage reaction resulting in the formation of AMP, that is energically less costly than de novo synthesis. In Symbiobacterium thermophilum (strain DSM 24528 / JCM 14929 / IAM 14863 / T), this protein is Adenine phosphoribosyltransferase.